The sequence spans 577 residues: Arginine--tRNA ligase (577 aa).

Residues 122–132 (PNVAKEMHVGH) carry the 'HIGH' region motif.

It belongs to the class-I aminoacyl-tRNA synthetase family. Monomer.

It is found in the cytoplasm. It catalyses the reaction tRNA(Arg) + L-arginine + ATP = L-arginyl-tRNA(Arg) + AMP + diphosphate. The protein is Arginine--tRNA ligase of Haemophilus influenzae (strain 86-028NP).